We begin with the raw amino-acid sequence, 74 residues long: Conotoxin MiK41 (74 aa).

The first 22 residues, 1–22, serve as a signal peptide directing secretion; that stretch reads MKLTCVLIITVLFLTACQLTTA. The propeptide occupies 23–45; that stretch reads VTYSRGEHKHRALMSTGTNYRLP. Cystine bridges form between Cys48/Cys62, Cys55/Cys66, and Cys61/Cys73.

Belongs to the conotoxin O1 superfamily. In terms of tissue distribution, expressed by the venom duct.

The protein localises to the secreted. The chain is Conotoxin MiK41 from Conus miles (Soldier cone).